Reading from the N-terminus, the 41-residue chain is Large ribosomal subunit protein bL36 (41 aa).

This sequence belongs to the bacterial ribosomal protein bL36 family.

The chain is Large ribosomal subunit protein bL36 from Cereibacter sphaeroides (strain ATCC 17029 / ATH 2.4.9) (Rhodobacter sphaeroides).